Reading from the N-terminus, the 251-residue chain is DNA repair protein RecO (251 aa).

It belongs to the RecO family.

Involved in DNA repair and RecF pathway recombination. This Acidiphilium cryptum (strain JF-5) protein is DNA repair protein RecO.